A 179-amino-acid polypeptide reads, in one-letter code: Large ribosomal subunit protein uL5 (179 aa).

This sequence belongs to the universal ribosomal protein uL5 family. Part of the 50S ribosomal subunit; part of the 5S rRNA/L5/L18/L25 subcomplex. Contacts the 5S rRNA and the P site tRNA. Forms a bridge to the 30S subunit in the 70S ribosome.

Its function is as follows. This is one of the proteins that bind and probably mediate the attachment of the 5S RNA into the large ribosomal subunit, where it forms part of the central protuberance. In the 70S ribosome it contacts protein S13 of the 30S subunit (bridge B1b), connecting the 2 subunits; this bridge is implicated in subunit movement. Contacts the P site tRNA; the 5S rRNA and some of its associated proteins might help stabilize positioning of ribosome-bound tRNAs. This chain is Large ribosomal subunit protein uL5, found in Halalkalibacterium halodurans (strain ATCC BAA-125 / DSM 18197 / FERM 7344 / JCM 9153 / C-125) (Bacillus halodurans).